The primary structure comprises 200 residues: Large ribosomal subunit protein uL4 (200 aa).

Positions 42-65 (TRAQKTRSDVSGGGAKPWRQKGTG) are disordered.

The protein belongs to the universal ribosomal protein uL4 family. Part of the 50S ribosomal subunit.

One of the primary rRNA binding proteins, this protein initially binds near the 5'-end of the 23S rRNA. It is important during the early stages of 50S assembly. It makes multiple contacts with different domains of the 23S rRNA in the assembled 50S subunit and ribosome. Functionally, forms part of the polypeptide exit tunnel. The polypeptide is Large ribosomal subunit protein uL4 (Photobacterium profundum (strain SS9)).